The sequence spans 176 residues: Cytochrome b561 homolog 1 (176 aa).

The Cytoplasmic portion of the chain corresponds to methionine 1 to threonine 7. Residues glutamine 8–leucine 28 traverse the membrane as a helical segment. Heme b is bound at residue histidine 12. The Periplasmic portion of the chain corresponds to arginine 29–threonine 45. Residue histidine 46 coordinates heme b. Residues histidine 46–isoleucine 63 form a helical membrane-spanning segment. The Cytoplasmic segment spans residues lysine 64 to serine 85. A helical membrane pass occupies residues leucine 86–methionine 106. The Periplasmic portion of the chain corresponds to alanine 107 to tryptophan 141. Positions 138 and 152 each coordinate heme b. Residues alanine 142 to isoleucine 162 traverse the membrane as a helical segment. Topologically, residues glutamine 163 to lysine 176 are cytoplasmic.

Belongs to the cytochrome b561 family. Heme b is required as a cofactor.

It is found in the cell inner membrane. In Escherichia coli (strain K12), this protein is Cytochrome b561 homolog 1 (yodB).